A 229-amino-acid chain; its full sequence is Urease accessory protein UreG (229 aa).

24–31 (GPVGSGKT) is a GTP binding site.

The protein belongs to the SIMIBI class G3E GTPase family. UreG subfamily. In terms of assembly, homodimer. UreD, UreF and UreG form a complex that acts as a GTP-hydrolysis-dependent molecular chaperone, activating the urease apoprotein by helping to assemble the nickel containing metallocenter of UreC. The UreE protein probably delivers the nickel.

Its subcellular location is the cytoplasm. Facilitates the functional incorporation of the urease nickel metallocenter. This process requires GTP hydrolysis, probably effectuated by UreG. In Albidiferax ferrireducens (strain ATCC BAA-621 / DSM 15236 / T118) (Rhodoferax ferrireducens), this protein is Urease accessory protein UreG.